The chain runs to 538 residues: Putative cysteine ligase BshC (538 aa).

A coiled-coil region spans residues Ile-248 to Leu-268.

This sequence belongs to the BshC family.

In terms of biological role, involved in bacillithiol (BSH) biosynthesis. May catalyze the last step of the pathway, the addition of cysteine to glucosamine malate (GlcN-Mal) to generate BSH. In Bacillus cereus (strain B4264), this protein is Putative cysteine ligase BshC.